The following is a 1378-amino-acid chain: Hybrid signal transduction histidine kinase H (1378 aa).

Positions 212–242 (KEKFKKEELINDFKSRLETLENKIDQRVDER) form a coiled coil. The PAS domain maps to 243–314 (IETRFKYVLE…NNNNNNNNNN (72 aa)). Residues 294 to 337 (YQQHNNNNNNNNNNNNNNNNNNNNNSNNKSPIINSPNTTSPTNT) form a disordered region. The segment covering 298–337 (NNNNNNNNNNNNNNNNNNNNNSNNKSPIINSPNTTSPTNT) has biased composition (low complexity). The region spanning 498–805 (TMSHEMRTPL…SFHFLVEVFF (308 aa)) is the Histidine kinase domain. Position 501 is a phosphohistidine; by autocatalysis (histidine 501). The span at 663–696 (NNSNNSNNNHNHNNNNNNNNHLNCSGSFNNNGFN) shows a compositional bias: low complexity. Disordered stretches follow at residues 663–717 (NNSN…DKHC), 905–924 (TNNNNSNNDNNNNNTTSTTT), and 1103–1213 (NNSN…HPNP). Basic residues predominate over residues 697-714 (HGHHHHHHHHHHHHHHHD). Low complexity-rich tracts occupy residues 1103–1119 (NNSNNNINNNNNNSGSS) and 1136–1187 (SPSL…NNNN). The span at 1188–1206 (LNHYNSDSILSSDLSPQQH) shows a compositional bias: polar residues. In terms of domain architecture, Response regulatory spans 1244–1364 (KIMVAEDSLV…ILAVELKRAW (121 aa)). The residue at position 1297 (aspartate 1297) is a 4-aspartylphosphate.

In terms of processing, activation probably requires transfer of a phosphate group between a histidine in the kinase core (transmitter) domain and an aspartate of the receiver domain.

The enzyme catalyses ATP + protein L-histidine = ADP + protein N-phospho-L-histidine.. In terms of biological role, acts as a receptor histidine kinase for a signal transduction pathway. This protein undergoes an ATP-dependent autophosphorylation at a conserved histidine residue in the kinase core, and a phosphoryl group is then transferred to a conserved aspartate residue in the receiver domain. The sequence is that of Hybrid signal transduction histidine kinase H (dhkH) from Dictyostelium discoideum (Social amoeba).